Consider the following 157-residue polypeptide: Transcriptional repressor NrdR (157 aa).

A zinc finger lies at Cys3–Cys34. The 91-residue stretch at Leu46–Asp136 folds into the ATP-cone domain.

The protein belongs to the NrdR family. The cofactor is Zn(2+).

Its function is as follows. Negatively regulates transcription of bacterial ribonucleotide reductase nrd genes and operons by binding to NrdR-boxes. The polypeptide is Transcriptional repressor NrdR (Leifsonia xyli subsp. xyli (strain CTCB07)).